The following is a 152-amino-acid chain: Ubiquitin-conjugating enzyme E2 N (152 aa).

The region spanning 3–149 (GLPRRIIKET…ARAWTRLYAM (147 aa)) is the UBC core domain. The residue at position 82 (K82) is an N6-acetyllysine. The active-site Glycyl thioester intermediate is the C87. Residue K92 forms a Glycyl lysine isopeptide (Lys-Gly) (interchain with G-Cter in ISG15) linkage.

The protein belongs to the ubiquitin-conjugating enzyme family. Heterodimer with UBE2V2. Interacts (UBE2V2-UBE2N heterodimer) with the E3 ligase STUB1 (via the U-box domain); the complex has a specific 'Lys-63'-linked polyubiquitination activity. Interacts with RNF8 and RNF168. Interacts with RNF11. Interacts with the E3 ligases, HLTF and SHPRH; the interactions promote the 'Lys-63'-linked polyubiquitination of PCNA upon genotoxic stress and lead to DNA repair. Interacts with ARIH2 (via RING-type 2). Interacts with OTUB1; leading to inhibit E2-conjugating activity. Interacts with GPS2; leading to inhibit E2-conjugating activity. Interacts with RIGI and RNF135; involved in RIGI ubiquitination and activation. Conjugation to ISG15 impairs formation of the thioester bond with ubiquitin but not interaction with UBE2V2.

It catalyses the reaction S-ubiquitinyl-[E1 ubiquitin-activating enzyme]-L-cysteine + [E2 ubiquitin-conjugating enzyme]-L-cysteine = [E1 ubiquitin-activating enzyme]-L-cysteine + S-ubiquitinyl-[E2 ubiquitin-conjugating enzyme]-L-cysteine.. It functions in the pathway protein modification; protein ubiquitination. Activity is inhibited by binding to OTUB1, which prevents 'Lys-63'-linked polyubiquitination. Activity is inhibited by GPS2, leading to prevent 'Lys-63'-linked polyubiquitination. Its function is as follows. The UBE2V1-UBE2N and UBE2V2-UBE2N heterodimers catalyze the synthesis of non-canonical 'Lys-63'-linked polyubiquitin chains. This type of polyubiquitination does not lead to protein degradation by the proteasome. Mediates transcriptional activation of target genes. Plays a role in the control of progress through the cell cycle and differentiation. Plays a role in the error-free DNA repair pathway and contributes to the survival of cells after DNA damage. Acts together with the E3 ligases, HLTF and SHPRH, in the 'Lys-63'-linked poly-ubiquitination of PCNA upon genotoxic stress, which is required for DNA repair. Appears to act together with E3 ligase RNF5 in the 'Lys-63'-linked polyubiquitination of JKAMP thereby regulating JKAMP function by decreasing its association with components of the proteasome and ERAD. Promotes TRIM5 capsid-specific restriction activity and the UBE2V1-UBE2N heterodimer acts in concert with TRIM5 to generate 'Lys-63'-linked polyubiquitin chains which activate the MAP3K7/TAK1 complex which in turn results in the induction and expression of NF-kappa-B and MAPK-responsive inflammatory genes. Together with RNF135 and UB2V1, catalyzes the viral RNA-dependent 'Lys-63'-linked polyubiquitination of RIGI to activate the downstream signaling pathway that leads to interferon beta production. UBE2V1-UBE2N together with TRAF3IP2 E3 ubiquitin ligase mediate 'Lys-63'-linked polyubiquitination of TRAF6, a component of IL17A-mediated signaling pathway. In Bos taurus (Bovine), this protein is Ubiquitin-conjugating enzyme E2 N (UBE2N).